Consider the following 37-residue polypeptide: Photosystem II reaction center protein L (37 aa).

Residues methionine 1 to asparagine 13 are Cytoplasmic-facing. A helical transmembrane segment spans residues arginine 14–phenylalanine 35. Residues phenylalanine 36–asparagine 37 are Lumenal-facing.

PSII is composed of 1 copy each of membrane proteins PsbA, PsbB, PsbC, PsbD, PsbE, PsbF, PsbH, PsbI, PsbJ, PsbK, PsbL, PsbM, PsbT, PsbX, PsbY, PsbZ, Psb30/Ycf12, peripheral proteins PsbO, CyanoQ (PsbQ), PsbU, PsbV and a large number of cofactors. It forms dimeric complexes. Part of a photosystem II (PSII) assembly intermediate complex PSII-I; crystallized from a strain deleted of psbJ, it forms monomeric PSII before addition of the oxygen evolving complex. PSII-I includes 3 assembly factors not found in mature PSII (Psb27, Psb28 and Psb34). PSII binds multiple chlorophylls, carotenoids and specific lipids. is required as a cofactor.

It is found in the cellular thylakoid membrane. One of the components of the core complex of photosystem II (PSII). PSII is a light-driven water:plastoquinone oxidoreductase that uses light energy to abstract electrons from H(2)O, generating O(2) and a proton gradient subsequently used for ATP formation. It consists of a core antenna complex that captures photons, and an electron transfer chain that converts photonic excitation into a charge separation. This subunit is found at the monomer-monomer interface and is required for correct PSII assembly and/or dimerization. This subunit may make specific contacts with lipid(s). This chain is Photosystem II reaction center protein L, found in Thermosynechococcus vestitus (strain NIES-2133 / IAM M-273 / BP-1).